The chain runs to 243 residues: Ubiquinone/menaquinone biosynthesis C-methyltransferase UbiE (243 aa).

Residues threonine 69, aspartate 90, and 116–117 each bind S-adenosyl-L-methionine; that span reads DA.

This sequence belongs to the class I-like SAM-binding methyltransferase superfamily. MenG/UbiE family.

The enzyme catalyses a 2-demethylmenaquinol + S-adenosyl-L-methionine = a menaquinol + S-adenosyl-L-homocysteine + H(+). The catalysed reaction is a 2-methoxy-6-(all-trans-polyprenyl)benzene-1,4-diol + S-adenosyl-L-methionine = a 5-methoxy-2-methyl-3-(all-trans-polyprenyl)benzene-1,4-diol + S-adenosyl-L-homocysteine + H(+). It participates in quinol/quinone metabolism; menaquinone biosynthesis; menaquinol from 1,4-dihydroxy-2-naphthoate: step 2/2. Its pathway is cofactor biosynthesis; ubiquinone biosynthesis. Functionally, methyltransferase required for the conversion of demethylmenaquinol (DMKH2) to menaquinol (MKH2) and the conversion of 2-polyprenyl-6-methoxy-1,4-benzoquinol (DDMQH2) to 2-polyprenyl-3-methyl-6-methoxy-1,4-benzoquinol (DMQH2). This chain is Ubiquinone/menaquinone biosynthesis C-methyltransferase UbiE, found in Burkholderia cenocepacia (strain HI2424).